The chain runs to 428 residues: MTTITQKYEEAKEKYASIDVDTEAVLEKMADVKISMHVWQGDDVRGFLSEDELSGGISVTGNYPGVARSPQQLRQDLEKAFSLIPGKHKLNLHAIYLDTEERVDLNELEPKHFEPWVTWAKENGLGLDFNPTFFSHPMYRDGFTLAHPNPQVRDFWIEHGKRSRRIAEYFGRELGQVAVNNFWVPDGFKDNPVDRLTPRKRLMASLDEIFSEEIDPAYTVDAMESKLFGIGSEAYTVGSHEFYMGYGLTRNKLICLDAGHFHPTEVISNKLSSLSLFGEGMLLHVSRPVRWDSDHVVIMDDELQEIAKELVRNDLLGKTHVGLDFFDATINRVAAWVIGTRNTQKALMKAMLEPTNVLKEAELIGDFTTRLALTEELKDFPFADIWNYYCQENHVPIGLDWLTDVQEYEKVILPTRQLPTGKDSCRFS.

The Mn(2+) site is built by His260, Asp292, and Asp294.

The protein belongs to the rhamnose isomerase family. The cofactor is Mn(2+).

Its subcellular location is the cytoplasm. It carries out the reaction L-rhamnopyranose = L-rhamnulose. It functions in the pathway carbohydrate degradation; L-rhamnose degradation; glycerone phosphate from L-rhamnose: step 1/3. Catalyzes the interconversion of L-rhamnose and L-rhamnulose. The protein is L-rhamnose isomerase of Enterococcus faecalis (strain ATCC 700802 / V583).